The primary structure comprises 240 residues: tRNA (guanine-N(1)-)-methyltransferase (240 aa).

Residues Gly108 and 127-132 contribute to the S-adenosyl-L-methionine site; that span reads LGDFIL.

It belongs to the RNA methyltransferase TrmD family. As to quaternary structure, homodimer.

It localises to the cytoplasm. It catalyses the reaction guanosine(37) in tRNA + S-adenosyl-L-methionine = N(1)-methylguanosine(37) in tRNA + S-adenosyl-L-homocysteine + H(+). Functionally, specifically methylates guanosine-37 in various tRNAs. In Streptococcus mutans serotype c (strain ATCC 700610 / UA159), this protein is tRNA (guanine-N(1)-)-methyltransferase.